Here is an 87-residue protein sequence, read N- to C-terminus: uncharacterized protein (87 aa).

Positions 1-23 (MAVSVLRLTVVLGLLVLFLTCYA) are cleaved as a signal peptide. Residues 24–44 (DDKPDKPDDKPDDSGKDPKPD) form a disordered region.

Its subcellular location is the secreted. This is an uncharacterized protein from Homo sapiens (Human).